A 279-amino-acid chain; its full sequence is NH(3)-dependent NAD(+) synthetase (279 aa).

39-46 (GLSGGIDS) provides a ligand contact to ATP. Asp45 lines the Mg(2+) pocket. Position 122 (Arg122) interacts with deamido-NAD(+). Thr142 provides a ligand contact to ATP. Glu147 serves as a coordination point for Mg(2+). Residues Lys155 and Asp162 each contribute to the deamido-NAD(+) site. Residues Lys171 and Ser193 each contribute to the ATP site. 253 to 254 (HK) contacts deamido-NAD(+).

The protein belongs to the NAD synthetase family. In terms of assembly, homodimer.

The enzyme catalyses deamido-NAD(+) + NH4(+) + ATP = AMP + diphosphate + NAD(+) + H(+). It participates in cofactor biosynthesis; NAD(+) biosynthesis; NAD(+) from deamido-NAD(+) (ammonia route): step 1/1. Catalyzes the ATP-dependent amidation of deamido-NAD to form NAD. Uses ammonia as a nitrogen source. This Sulfolobus acidocaldarius (strain ATCC 33909 / DSM 639 / JCM 8929 / NBRC 15157 / NCIMB 11770) protein is NH(3)-dependent NAD(+) synthetase.